The sequence spans 471 residues: Argininosuccinate lyase (471 aa).

The protein belongs to the lyase 1 family. Argininosuccinate lyase subfamily.

It is found in the cytoplasm. The enzyme catalyses 2-(N(omega)-L-arginino)succinate = fumarate + L-arginine. Its pathway is amino-acid biosynthesis; L-arginine biosynthesis; L-arginine from L-ornithine and carbamoyl phosphate: step 3/3. This is Argininosuccinate lyase from Acidiphilium cryptum (strain JF-5).